The primary structure comprises 485 residues: U4/U6 small nuclear ribonucleoprotein Prp31 homolog (485 aa).

Disordered stretches follow at residues 1–36 (MATL…EEDV) and 329–361 (IEKW…RRLR). The span at 11–36 (DLDELSDNEAELDENDGDVGKEEEDV) shows a compositional bias: acidic residues. A Nop domain is found at 216–334 (IAPNLSAIVG…IRKKIEKWQE (119 aa)). Residues 334–348 (EPPPARQPKPLPVPD) show a composition bias toward pro residues. The segment covering 352–361 (KKRRGGRRLR) has biased composition (basic residues). The Nuclear localization signal signature appears at 352-365 (KKRRGGRRLRKMKE).

It belongs to the PRP31 family. In terms of assembly, component of the U4/U6-U5 tri-snRNP complex composed of the U4, U6 and U5 snRNAs and pre-mRNA-splicing factors. Interacts with STA1 and SOP1.

Its subcellular location is the nucleus. It localises to the cajal body. Its function is as follows. Involved in pre-mRNA splicing. Required for the assembly of the U4/U5/U6 tri-snRNP complex, one of the building blocks of the spliceosome. Functions in association with STA1 and ZOP1 in spliceosome dynamics and pre-mRNA splicing. Required for transcriptional regulation and pre-mRNA splicing of cold-responsive genes, such as LTI78/RD29A, KIN2/COR6.6 or COR15A, especially under cold stress. May play a role in stress response. Involved in transcriptional gene silencing of endogenous transposable elements, independently of the RNA-directed DNA methylation (RdDM) pathway. Seems not to participate in the small RNA biogenesis of the RdDM pathway. This chain is U4/U6 small nuclear ribonucleoprotein Prp31 homolog, found in Arabidopsis thaliana (Mouse-ear cress).